A 428-amino-acid polypeptide reads, in one-letter code: GTPase Obg (428 aa).

The Obg domain maps to 1-158 (MFVDQVKIYV…RYIVLELKVL (158 aa)). Positions 118-143 (KGGRGGRGNTRFATPANPAPQLSENG) are disordered. The OBG-type G domain maps to 159–329 (ADVGLVGFPS…LLFEIADRLE (171 aa)). GTP-binding positions include 165 to 172 (GFPSVGKS), 190 to 194 (FTTLN), 212 to 215 (DLPG), 282 to 285 (NKMD), and 310 to 312 (SAV). Mg(2+) is bound by residues S172 and T192. Residues 350-428 (KLEDEEAPFE…LLEFEFEFID (79 aa)) enclose the OCT domain.

It belongs to the TRAFAC class OBG-HflX-like GTPase superfamily. OBG GTPase family. In terms of assembly, monomer. Mg(2+) is required as a cofactor.

The protein resides in the cytoplasm. In terms of biological role, an essential GTPase which binds GTP, GDP and possibly (p)ppGpp with moderate affinity, with high nucleotide exchange rates and a fairly low GTP hydrolysis rate. Plays a role in control of the cell cycle, stress response, ribosome biogenesis and in those bacteria that undergo differentiation, in morphogenesis control. The protein is GTPase Obg of Bacillus licheniformis (strain ATCC 14580 / DSM 13 / JCM 2505 / CCUG 7422 / NBRC 12200 / NCIMB 9375 / NCTC 10341 / NRRL NRS-1264 / Gibson 46).